We begin with the raw amino-acid sequence, 222 residues long: Large ribosomal subunit protein uL3 (222 aa).

Residues 129–150 (HNFRGLPDSHGTERKHRSPGSI) are disordered.

The protein belongs to the universal ribosomal protein uL3 family. Part of the 50S ribosomal subunit. Forms a cluster with proteins L14 and L19.

Functionally, one of the primary rRNA binding proteins, it binds directly near the 3'-end of the 23S rRNA, where it nucleates assembly of the 50S subunit. The polypeptide is Large ribosomal subunit protein uL3 (Acidothermus cellulolyticus (strain ATCC 43068 / DSM 8971 / 11B)).